The following is a 472-amino-acid chain: GTPase Der (472 aa).

2 EngA-type G domains span residues 3 to 166 (PVIA…PEQE) and 176 to 349 (IRIG…DSAM). GTP contacts are provided by residues 9–16 (GRPNVGKS), 56–60 (DTGGI), 118–121 (NKID), 182–189 (GRPNVGKS), 229–233 (DTAGV), and 294–297 (NKWD). The KH-like domain maps to 350–434 (AKWSTNQLTT…PIRFEFRSGE (85 aa)). Residues 433–472 (GENPFAGKKNKLSPRQQKKKERLMKHVKKLKHKQKRKKSR) are disordered. Basic residues predominate over residues 440 to 472 (KKNKLSPRQQKKKERLMKHVKKLKHKQKRKKSR).

The protein belongs to the TRAFAC class TrmE-Era-EngA-EngB-Septin-like GTPase superfamily. EngA (Der) GTPase family. As to quaternary structure, associates with the 50S ribosomal subunit.

Functionally, GTPase that plays an essential role in the late steps of ribosome biogenesis. This is GTPase Der from Hahella chejuensis (strain KCTC 2396).